Reading from the N-terminus, the 507-residue chain is Maturase K (507 aa).

This sequence belongs to the intron maturase 2 family. MatK subfamily.

It localises to the plastid. Its subcellular location is the chloroplast. Functionally, usually encoded in the trnK tRNA gene intron. Probably assists in splicing its own and other chloroplast group II introns. This chain is Maturase K, found in Fagopyrum esculentum (Common buckwheat).